The primary structure comprises 267 residues: Trehalose 2-sulfotransferase (267 aa).

Alpha,alpha-trehalose is bound by residues Gln14, 33–39, Pro48, and Trp53; that span reads EPQEFFQ. Glu36 functions as the Proton acceptor in the catalytic mechanism.

This sequence belongs to the Stf0 sulfotransferase family. As to quaternary structure, homodimer.

It catalyses the reaction alpha,alpha-trehalose + 3'-phosphoadenylyl sulfate = 2-O-sulfo-alpha,alpha-trehalose + adenosine 3',5'-bisphosphate + H(+). Its pathway is glycolipid metabolism. Its function is as follows. Catalyzes the sulfuryl group transfer from 3'-phosphoadenosine-5'-phosphosulfate (PAPS) to trehalose, leading to trehalose-2-sulfate (T2S). The sulfation of trehalose is the first step in the biosynthesis of sulfolipid-1 (SL-1), a major cell wall glycolipid and the most abundant sulfated metabolite found in Mycobacterium tuberculosis, that is a potential virulence factor thought to mediate host-pathogen interactions. In Mycobacterium tuberculosis (strain ATCC 35801 / TMC 107 / Erdman), this protein is Trehalose 2-sulfotransferase.